The primary structure comprises 434 residues: ATP-sensitive inward rectifier potassium channel 14 (434 aa).

Residues 1-81 (MGLARALRRL…LSDLFTTCVD (81 aa)) are Cytoplasmic-facing. Position 79 is an S-nitrosocysteine (Cys-79). Residues 82-108 (VRWRWMCLLFSCSFLASWLLFGLTFWL) traverse the membrane as a helical segment. The Extracellular portion of the chain corresponds to 109–131 (IASLHGDLAAPPPPAPCFSQVAS). An intramembrane region (helical; Pore-forming) is located at residues 132–148 (FLAAFLFALETQTSIGY). The short motif at 145–150 (SIGYGV) is the Selectivity filter element. Residues 149–157 (GVRSVTEEC) lie on the Extracellular side of the membrane. Residues 158-185 (PAAVAAVVLQCIAGCVLDAFVVGAVMAK) form a helical membrane-spanning segment. Residues 186–434 (MAKPKKRNET…TPTLALTLPP (249 aa)) are Cytoplasmic-facing. The tract at residues 398–434 (QEEDEEEDTKEGTSAETPERAASPQALTPTLALTLPP) is disordered. Residues 407–416 (KEGTSAETPE) show a composition bias toward basic and acidic residues. A compositionally biased stretch (low complexity) spans 418–434 (AASPQALTPTLALTLPP).

This sequence belongs to the inward rectifier-type potassium channel (TC 1.A.2.1) family. KCNJ14 subfamily.

It is found in the membrane. The enzyme catalyses K(+)(in) = K(+)(out). Its activity is regulated as follows. Channel activity is regulated by variations of cytosolic pH; channels are activated by alkaline and inhibited by acidic pH values. Inhibited by Ba(2+) and Cs(+) in a voltage-dependent manner; sensitivity to those inhibitors is lower than in other Kir channels. Functionally, inward rectifier potassium channels are characterized by a greater tendency to allow potassium to flow into the cell rather than out of it. Their voltage dependence is regulated by the concentration of extracellular potassium; as external potassium is raised, the voltage range of the channel opening shifts to more positive voltages. This chain is ATP-sensitive inward rectifier potassium channel 14 (Kcnj14), found in Mus musculus (Mouse).